The sequence spans 388 residues: S-adenosylmethionine synthase (388 aa).

Histidine 16 serves as a coordination point for ATP. Aspartate 18 lines the Mg(2+) pocket. Residue glutamate 44 participates in K(+) binding. L-methionine-binding residues include glutamate 57 and glutamine 100. The segment at 100-110 (QSPDIAQGVDK) is flexible loop. Residues 167 to 169 (DAK), 233 to 234 (RF), aspartate 242, 248 to 249 (RK), alanine 265, and lysine 269 contribute to the ATP site. Aspartate 242 is a binding site for L-methionine. L-methionine is bound at residue lysine 273.

The protein belongs to the AdoMet synthase family. In terms of assembly, homotetramer; dimer of dimers. It depends on Mg(2+) as a cofactor. K(+) serves as cofactor.

It localises to the cytoplasm. It catalyses the reaction L-methionine + ATP + H2O = S-adenosyl-L-methionine + phosphate + diphosphate. It functions in the pathway amino-acid biosynthesis; S-adenosyl-L-methionine biosynthesis; S-adenosyl-L-methionine from L-methionine: step 1/1. Catalyzes the formation of S-adenosylmethionine (AdoMet) from methionine and ATP. The overall synthetic reaction is composed of two sequential steps, AdoMet formation and the subsequent tripolyphosphate hydrolysis which occurs prior to release of AdoMet from the enzyme. In Polynucleobacter asymbioticus (strain DSM 18221 / CIP 109841 / QLW-P1DMWA-1) (Polynucleobacter necessarius subsp. asymbioticus), this protein is S-adenosylmethionine synthase.